The following is a 189-amino-acid chain: GTP cyclohydrolase 1 (189 aa).

The Zn(2+) site is built by cysteine 78, histidine 81, and cysteine 150.

It belongs to the GTP cyclohydrolase I family. As to quaternary structure, homomer.

The enzyme catalyses GTP + H2O = 7,8-dihydroneopterin 3'-triphosphate + formate + H(+). Its pathway is cofactor biosynthesis; 7,8-dihydroneopterin triphosphate biosynthesis; 7,8-dihydroneopterin triphosphate from GTP: step 1/1. The polypeptide is GTP cyclohydrolase 1 (Bacillus cytotoxicus (strain DSM 22905 / CIP 110041 / 391-98 / NVH 391-98)).